The following is a 302-amino-acid chain: MQDLSAKQQYNNNKLQKRLRRHIGQAIADFNMIEEGDRVMVCLSGGKDSFAMLDILRNLQASAPINFDIVAVNLDQKQPGFPPEVLPQYLDSIGVEYKIVEEDTYSIVKEKIPEGKTTCSLCSRLRRGILYRTASELGATKIALGHHRDDILETLMLNMFYAGKLKAMPPKLVSDDGKHVVIRPLAYCHEKDLIRYAEWKEFPIIPCNLCGSQENLQRKAMKEMLNEWDRRFPGRIETMFNAIQNITPSHLMDHKLFDFKSINSSSGVIDGGDIAFDKPDIPAVPQLMVIEPDDRVEIIELN.

Residues 44–49 carry the PP-loop motif motif; that stretch reads SGGKDS. [4Fe-4S] cluster contacts are provided by cysteine 119, cysteine 122, and cysteine 210.

It belongs to the TtcA family. In terms of assembly, homodimer. Mg(2+) serves as cofactor. The cofactor is [4Fe-4S] cluster.

The protein resides in the cytoplasm. The enzyme catalyses cytidine(32) in tRNA + S-sulfanyl-L-cysteinyl-[cysteine desulfurase] + AH2 + ATP = 2-thiocytidine(32) in tRNA + L-cysteinyl-[cysteine desulfurase] + A + AMP + diphosphate + H(+). The protein operates within tRNA modification. Its function is as follows. Catalyzes the ATP-dependent 2-thiolation of cytidine in position 32 of tRNA, to form 2-thiocytidine (s(2)C32). The sulfur atoms are provided by the cysteine/cysteine desulfurase (IscS) system. The sequence is that of tRNA-cytidine(32) 2-sulfurtransferase from Tolumonas auensis (strain DSM 9187 / NBRC 110442 / TA 4).